Reading from the N-terminus, the 201-residue chain is MSRYRGPRFKKIRRLGALPGLTSKRPRAGSDPRNQSRSGKKSQYRIRLEEKQKLRFHYGLTERQLLKYVRIAGKAKGSTGQVLLQLLEMRLDNTLFRLGMALTIPQARQLVNHGHILVNGRIVDIPSYRCKPRDIITVKDEQNSRTLVQNLLDSSTPEELPNHLTLHTFQYEGLVNQIIDRKCVGLKINELLVVEYYSRQT.

Basic residues predominate over residues 1–14 (MSRYRGPRFKKIRR). The segment at 1-44 (MSRYRGPRFKKIRRLGALPGLTSKRPRAGSDPRNQSRSGKKSQY) is disordered. In terms of domain architecture, S4 RNA-binding spans 89 to 152 (MRLDNTLFRL…NSRTLVQNLL (64 aa)).

It belongs to the universal ribosomal protein uS4 family. As to quaternary structure, part of the 30S ribosomal subunit. Contacts protein S5. The interaction surface between S4 and S5 is involved in control of translational fidelity.

The protein localises to the plastid. It localises to the chloroplast. One of the primary rRNA binding proteins, it binds directly to 16S rRNA where it nucleates assembly of the body of the 30S subunit. Its function is as follows. With S5 and S12 plays an important role in translational accuracy. This chain is Small ribosomal subunit protein uS4c (rps4), found in Draba nemorosa (Woodland whitlowgrass).